The sequence spans 316 residues: Glutathione synthetase (316 aa).

The 187-residue stretch at 124 to 310 folds into the ATP-grasp domain; that stretch reads EKLFTAWFPE…ITGKLMDAIE (187 aa). 150 to 207 contacts ATP; sequence FREEHGDVILKPLDGMGGASIFRVKENDPNVSVIIETLTNHGQNYAMAQTFVPDISNG. Residues glutamate 281 and asparagine 283 each contribute to the Mg(2+) site.

Belongs to the prokaryotic GSH synthase family. Mg(2+) is required as a cofactor. Requires Mn(2+) as cofactor.

The enzyme catalyses gamma-L-glutamyl-L-cysteine + glycine + ATP = glutathione + ADP + phosphate + H(+). The protein operates within sulfur metabolism; glutathione biosynthesis; glutathione from L-cysteine and L-glutamate: step 2/2. In Vibrio parahaemolyticus serotype O3:K6 (strain RIMD 2210633), this protein is Glutathione synthetase.